The following is a 950-amino-acid chain: Zinc finger CCCH domain-containing protein 3 (950 aa).

4 disordered regions span residues 32–106 (GNSS…HPEP), 127–182 (IKPP…TKVG), 201–220 (VVKS…RTVS), and 314–489 (SEKS…VLRK). Residues 56 to 74 (RPSRRGFSSHHGPSWRKKY) are compositionally biased toward basic residues. Residues 76 to 96 (LVNQPVESSDPASDPAFQTSL) are compositionally biased toward polar residues. Polar residues predominate over residues 327-338 (PRTTLESGNKAT). Over residues 344–360 (KTEKPQPKVDPEVRPEK) the composition is skewed to basic and acidic residues. The span at 370-388 (SPSKYKWKASSPSASSSSS) shows a compositional bias: low complexity. The segment covering 402 to 412 (SQLSPVPSRPT) has biased composition (polar residues). The residue at position 405 (Ser405) is a Phosphoserine. Residues 438–449 (VKSRTKIIRRRG) are compositionally biased toward basic residues. The span at 460–470 (SPTTATTSKNH) shows a compositional bias: polar residues. 5 C3H1-type zinc fingers span residues 662–690 (EKKR…HDPE), 694–717 (VCTR…HHVS), 718–744 (KEKM…HVYV), 745–772 (SRKA…HTLL), and 773–795 (CPDF…HRNQ). Residues 793–950 (RNQKRHGRRT…GKPLHIKPRL (158 aa)) are disordered. Positions 828-838 (PTTTQRSVRQM) are enriched in polar residues. Over residues 839–849 (SSGLASGAEAP) the composition is skewed to low complexity. Phosphoserine occurs at positions 851 and 855. A compositionally biased stretch (low complexity) spans 857–888 (RVLASTSTLSSKATAASSPSPSPSTSSPAPSL). Over residues 914-928 (SLHSSPSPGGQTETG) the composition is skewed to polar residues. A phosphoserine mark is found at Ser918, Ser920, and Ser934.

Interacts with SMAD1, SMAD3, SMAD4, CPSF2 and CPSF3.

The protein localises to the nucleus. Functionally, required for the export of polyadenylated mRNAs from the nucleus. Enhances ACVR1B-induced SMAD-dependent transcription. Binds to single-stranded DNA but not to double-stranded DNA in vitro. Involved in RNA cleavage. The sequence is that of Zinc finger CCCH domain-containing protein 3 (Zc3h3) from Mus musculus (Mouse).